The chain runs to 340 residues: Phenylalanine--tRNA ligase alpha subunit (340 aa).

Glu-258 is a Mg(2+) binding site.

This sequence belongs to the class-II aminoacyl-tRNA synthetase family. Phe-tRNA synthetase alpha subunit type 1 subfamily. As to quaternary structure, tetramer of two alpha and two beta subunits. It depends on Mg(2+) as a cofactor.

Its subcellular location is the cytoplasm. It catalyses the reaction tRNA(Phe) + L-phenylalanine + ATP = L-phenylalanyl-tRNA(Phe) + AMP + diphosphate + H(+). The protein is Phenylalanine--tRNA ligase alpha subunit of Corynebacterium efficiens (strain DSM 44549 / YS-314 / AJ 12310 / JCM 11189 / NBRC 100395).